The chain runs to 271 residues: Mannosyl-3-phosphoglycerate phosphatase (271 aa).

The active-site Nucleophile is the Asp13. The Mg(2+) site is built by Asp13, Asp15, and Asp214.

It belongs to the HAD-like hydrolase superfamily. MPGP family. The cofactor is Mg(2+).

The protein resides in the cytoplasm. The catalysed reaction is 2-O-(alpha-D-mannosyl)-3-phosphoglycerate + H2O = (2R)-2-O-(alpha-D-mannosyl)-glycerate + phosphate. In Escherichia coli O6:H1 (strain CFT073 / ATCC 700928 / UPEC), this protein is Mannosyl-3-phosphoglycerate phosphatase (yedP).